The chain runs to 92 residues: Protein S100-A12 (92 aa).

EF-hand domains are found at residues N13–T48 and K49–T84. H16 lines the Cu cation pocket. Residue H16 participates in Zn(2+) binding. Residues S19 and H24 each coordinate Ca(2+). Position 26 (D26) interacts with Cu cation. A Zn(2+)-binding site is contributed by D26. T27 and E32 together coordinate Ca(2+). Positions T38–T53 are hinge domain. Ca(2+)-binding residues include D62, N64, D66, Q68, and E73. 2 residues coordinate Cu cation: H86 and H90. 2 residues coordinate Zn(2+): H86 and H90.

This sequence belongs to the S-100 family. Homodimer. Homooligomer (tetramer or hexamer) in the presence of calcium, zinc and copper ions. Interacts with AGER and both calcium and zinc are essential for the interaction. Interacts with CACYBP in a calcium-dependent manner. Found essentially in granulocytes with small amounts found in lymphocytes.

It localises to the secreted. It is found in the cytoplasm. Its subcellular location is the cytoskeleton. The protein resides in the cell membrane. In terms of biological role, S100A12 is a calcium-, zinc- and copper-binding protein which plays a prominent role in the regulation of inflammatory processes and immune response. Its pro-inflammatory activity involves recruitment of leukocytes, promotion of cytokine and chemokine production, and regulation of leukocyte adhesion and migration. Acts as an alarmin or a danger associated molecular pattern (DAMP) molecule and stimulates innate immune cells via binding to receptor for advanced glycation endproducts (AGER). Binding to AGER activates the MAP-kinase and NF-kappa-B signaling pathways leading to production of pro-inflammatory cytokines and up-regulation of cell adhesion molecules ICAM1 and VCAM1. Acts as a monocyte and mast cell chemoattractant. Can stimulate mast cell degranulation and activation which generates chemokines, histamine and cytokines inducing further leukocyte recruitment to the sites of inflammation. Can inhibit the activity of matrix metalloproteinases; MMP2, MMP3 and MMP9 by chelating Zn(2+) from their active sites. This Sus scrofa (Pig) protein is Protein S100-A12 (S100A12).